The chain runs to 1670 residues: DNA-directed RNA polymerase I subunit 1 (1670 aa).

Positions 79, 82, 89, 92, 119, and 122 each coordinate Zn(2+). A disordered region spans residues 154–185 (ESNTPTKSKSSDESCESVVTTDSSEECEDSDV). Positions 176 to 185 (SSEECEDSDV) are enriched in acidic residues. Zn(2+)-binding residues include Cys-213 and Cys-216. Positions 255–293 (TSSVENPDGFDDSGIDALSEVEDGDKETREKSTEVAAEF) are disordered. A compositionally biased stretch (acidic residues) spans 262-279 (DGFDDSGIDALSEVEDGD). The segment covering 280–293 (KETREKSTEVAAEF) has biased composition (basic and acidic residues). Mg(2+)-binding residues include Asp-602, Asp-604, and Asp-606. A bridging helix region spans residues 1005–1017 (PQEYYFHCMAGRE). Residues 1318 to 1437 (TGPIAGNETD…EQSKKKRRKF (120 aa)) are disordered. Composition is skewed to acidic residues over residues 1339-1354 (DDGD…DDLG), 1366-1379 (DEMD…DETN), and 1388-1399 (EDPEMDSENEDT). A compositionally biased stretch (basic and acidic residues) spans 1415-1429 (EPQKEVKGVKNVKEQ).

It belongs to the RNA polymerase beta' chain family. Component of the RNA polymerase I (Pol I) complex consisting of at least 13 subunits.

It is found in the nucleus. The catalysed reaction is RNA(n) + a ribonucleoside 5'-triphosphate = RNA(n+1) + diphosphate. Functionally, DNA-dependent RNA polymerase catalyzes the transcription of DNA into RNA using the four ribonucleoside triphosphates as substrates. Largest and catalytic core component of RNA polymerase I which synthesizes ribosomal RNA precursors. Forms the polymerase active center together with the second largest subunit. A single stranded DNA template strand of the promoter is positioned within the central active site cleft of Pol I. A bridging helix emanates from NRPA1 and crosses the cleft near the catalytic site and is thought to promote translocation of Pol I by acting as a ratchet that moves the RNA-DNA hybrid through the active site by switching from straight to bent conformations at each step of nucleotide addition. This chain is DNA-directed RNA polymerase I subunit 1, found in Arabidopsis thaliana (Mouse-ear cress).